Consider the following 211-residue polypeptide: Uridine kinase (211 aa).

12–19 (GGSGSGKT) serves as a coordination point for ATP.

It belongs to the uridine kinase family.

The protein resides in the cytoplasm. It carries out the reaction uridine + ATP = UMP + ADP + H(+). The enzyme catalyses cytidine + ATP = CMP + ADP + H(+). It functions in the pathway pyrimidine metabolism; CTP biosynthesis via salvage pathway; CTP from cytidine: step 1/3. The protein operates within pyrimidine metabolism; UMP biosynthesis via salvage pathway; UMP from uridine: step 1/1. The polypeptide is Uridine kinase (Geobacillus sp. (strain WCH70)).